The following is a 526-amino-acid chain: MSVRYSSSKQYSSSRSGGGGGGGSSLRISSSKGSLGGGYSSGGFSGGSFSRGSSAGGCFGGSSSIYGGGLGSGFGGGYGSSFGGSYGGSFGGGYGGGGFGGGSFGGGSFGGGLGGGFGDGGLISGNQKITMQNLNDRLASYLDKVRALEESNYELEVKIKEWYEKYGNSRQREPRDYSKYYQTIDDLKNQIFNLTTDNANILIQVDNARLAADDFRLKYENEVTLRQSVEADINGLRRVLDELTLTKTDLEMQIESLTEELAYLKKNHEEEMRDLQNVSTGDVNVEMNAAPGVDLTELLNNMRSQYEQLAEKNRRDAEAWFNEKSKELTTEINSNLEQVSSHKSEITELRRTIQGLEIELQSQLALKQSLEASLAETEGRYCVQLSQIQSQISSLEEQLQQIRAETECQNAEYQQLLDIKIRLENEIQTYRSLLEGEGSSGGGSYGGGRGYGGSSGGGGGGYGGGSSSGGYGGGSSSGGGHGGSSGGSYGGGSSSGGGHGGGSSSGGHKSTTTGSVGESSSKGPRY.

Low complexity predominate over residues 1–15 (MSVRYSSSKQYSSSR). Residues 1-29 (MSVRYSSSKQYSSSRSGGGGGGGSSLRIS) form a disordered region. The interval 1 to 126 (MSVRYSSSKQ…FGDGGLISGN (126 aa)) is head. A phosphoserine mark is found at Ser-14, Ser-16, Ser-34, Ser-45, Ser-48, and Ser-151. Positions 127–162 (QKITMQNLNDRLASYLDKVRALEESNYELEVKIKEW) are coil 1A. The 315-residue stretch at 127-441 (QKITMQNLND…SLLEGEGSSG (315 aa)) folds into the IF rod domain. The interval 163-183 (YEKYGNSRQREPRDYSKYYQT) is linker 1. The interval 184–275 (IDDLKNQIFN…KNHEEEMRDL (92 aa)) is coil 1B. The tract at residues 276 to 298 (QNVSTGDVNVEMNAAPGVDLTEL) is linker 12. Residues 299–437 (LNNMRSQYEQ…QTYRSLLEGE (139 aa)) form a coil 2 region. Residues 438–526 (GSSGGGSYGG…GESSSKGPRY (89 aa)) form a tail region. Residues 458 to 505 (GGGGYGGGSSSGGYGGGSSSGGGHGGSSGGSYGGGSSSGGGHGGGSSS) show a composition bias toward gly residues. Residues 458-526 (GGGGYGGGSS…GESSSKGPRY (69 aa)) are disordered. Residues 506–526 (GGHKSTTTGSVGESSSKGPRY) are compositionally biased toward low complexity.

It belongs to the intermediate filament family. As to quaternary structure, heterotetramer of two type I and two type II keratins. Heterodimer with KRT1. Two heterodimers of KRT1 and KRT10 form a heterotetramer. The KRT10 subunit in the heterotetramer is probably disulfide-linked.

It localises to the secreted. Its subcellular location is the extracellular space. It is found in the cell surface. The protein resides in the cytoplasm. Its function is as follows. Plays a role in the establishment of the epidermal barrier on plantar skin. Involved in the maintenance of cell layer development and keratin filament bundles in suprabasal cells of the epithelium. The polypeptide is Keratin, type I cytoskeletal 10 (KRT10) (Bos taurus (Bovine)).